Consider the following 308-residue polypeptide: ADP-L-glycero-D-manno-heptose-6-epimerase (308 aa).

NADP(+) contacts are provided by residues 10-11, 31-32, lysine 38, lysine 53, 75-79, and asparagine 92; these read FI, DN, and EGACS. Catalysis depends on tyrosine 139, which acts as the Proton acceptor. Lysine 143 serves as a coordination point for NADP(+). Residue asparagine 168 participates in substrate binding. NADP(+) contacts are provided by valine 169 and lysine 177. Residue lysine 177 is the Proton acceptor of the active site. Substrate is bound by residues serine 179, histidine 186, 200 to 203, arginine 208, and tyrosine 271; that span reads FAGS.

The protein belongs to the NAD(P)-dependent epimerase/dehydratase family. HldD subfamily. As to quaternary structure, homopentamer. NADP(+) serves as cofactor.

It carries out the reaction ADP-D-glycero-beta-D-manno-heptose = ADP-L-glycero-beta-D-manno-heptose. The protein operates within nucleotide-sugar biosynthesis; ADP-L-glycero-beta-D-manno-heptose biosynthesis; ADP-L-glycero-beta-D-manno-heptose from D-glycero-beta-D-manno-heptose 7-phosphate: step 4/4. Functionally, catalyzes the interconversion between ADP-D-glycero-beta-D-manno-heptose and ADP-L-glycero-beta-D-manno-heptose via an epimerization at carbon 6 of the heptose. The sequence is that of ADP-L-glycero-D-manno-heptose-6-epimerase from Actinobacillus succinogenes (strain ATCC 55618 / DSM 22257 / CCUG 43843 / 130Z).